The chain runs to 272 residues: uncharacterized protein (272 aa).

Residues 1–22 form the signal peptide; that stretch reads MEYIKKIALYMSVLLLIIFIGG. A lipid anchor (N-palmitoyl cysteine) is attached at C23. The S-diacylglycerol cysteine moiety is linked to residue C23.

This sequence belongs to the staphylococcal tandem lipoprotein family.

Its subcellular location is the cell membrane. This is an uncharacterized protein from Staphylococcus aureus (strain MRSA252).